A 201-amino-acid chain; its full sequence is Histidinol dehydrogenase (201 aa).

Belongs to the histidinol dehydrogenase family. Homodimer. The cofactor is Zn(2+).

The catalysed reaction is L-histidinol + 2 NAD(+) + H2O = L-histidine + 2 NADH + 3 H(+). It functions in the pathway amino-acid biosynthesis; L-histidine biosynthesis; L-histidine from 5-phospho-alpha-D-ribose 1-diphosphate: step 9/9. Catalyzes the sequential NAD-dependent oxidations of L-histidinol to L-histidinaldehyde and then to L-histidine. The polypeptide is Histidinol dehydrogenase (hisD) (Buchnera aphidicola subsp. Melaphis rhois).